Consider the following 365-residue polypeptide: Peptide chain release factor 2 (365 aa).

Residue Gln-252 is modified to N5-methylglutamine.

This sequence belongs to the prokaryotic/mitochondrial release factor family. In terms of processing, methylated by PrmC. Methylation increases the termination efficiency of RF2.

Its subcellular location is the cytoplasm. Peptide chain release factor 2 directs the termination of translation in response to the peptide chain termination codons UGA and UAA. The polypeptide is Peptide chain release factor 2 (Escherichia coli (strain K12 / MC4100 / BW2952)).